We begin with the raw amino-acid sequence, 150 residues long: Peptide deformylase 1 (150 aa).

Residues cysteine 88 and histidine 130 each coordinate Fe cation. Glutamate 131 is a catalytic residue. Residue histidine 134 participates in Fe cation binding.

It belongs to the polypeptide deformylase family. Requires Fe(2+) as cofactor.

It carries out the reaction N-terminal N-formyl-L-methionyl-[peptide] + H2O = N-terminal L-methionyl-[peptide] + formate. Functionally, removes the formyl group from the N-terminal Met of newly synthesized proteins. Requires at least a dipeptide for an efficient rate of reaction. N-terminal L-methionine is a prerequisite for activity but the enzyme has broad specificity at other positions. The chain is Peptide deformylase 1 from Clostridium acetobutylicum (strain ATCC 824 / DSM 792 / JCM 1419 / IAM 19013 / LMG 5710 / NBRC 13948 / NRRL B-527 / VKM B-1787 / 2291 / W).